A 662-amino-acid polypeptide reads, in one-letter code: ATP-dependent RNA helicase DDX3X (662 aa).

N-acetylserine is present on serine 2. The segment at 2–139 is required for TBK1 and IKBKE-dependent IFNB1 activation; it reads SHVAVENALG…KSDEDDWSKP (138 aa). A Nuclear export signal motif is present at residues 12–21; that stretch reads LDQQFAGLDL. The segment at 19-144 is disordered; the sequence is LDLNSSDNQS…DWSKPLPPSE (126 aa). Residues 21-34 are compositionally biased toward polar residues; that stretch reads LNSSDNQSGGSTAS. Residues 38–44 form an interaction with EIF4E region; sequence YIPPHLR. Positions 44–68 are enriched in basic and acidic residues; sequence RNREATKGFYDKDSSGWSSSKDKDA. Lysine 55 is subject to N6-acetyllysine. Serine 82 and serine 90 each carry phosphoserine. The span at 94–130 shows a compositional bias: basic and acidic residues; that stretch reads GRFDDRGRGDYDGIGGRGDRSGFGKFERGGNSRWCDK. Residues 100–110 form an interaction with IKBKE region; sequence GRGDYDGIGGR. The interaction with GSK3B stretch occupies residues 100 to 662; it reads GRGDYDGIGG…NSQGVDWWGN (563 aa). Omega-N-methylarginine is present on arginine 101. Tyrosine 104 is subject to Phosphotyrosine. At arginine 110 the chain carries Omega-N-methylarginine. An N6-acetyllysine modification is found at lysine 118. A Phosphoserine modification is found at serine 131. The interaction with CHUK stretch occupies residues 139-172; it reads PLPPSERLEQELFSGGNTGINFEKYDDIPVEATG. The Q motif signature appears at 180–208; the sequence is ESFSDVEMGEIIMGNIELTRYTRPTPVQK. A Phosphoserine modification is found at serine 183. An ATP-binding site is contributed by 200–207; sequence YTRPTPVQ. One can recognise a Helicase ATP-binding domain in the interval 211 to 403; it reads IPIIKEKRDL…RDFLDEYIFL (193 aa). Lysine 215 is covalently cross-linked (Glycyl lysine isopeptide (Lys-Gly) (interchain with G-Cter in SUMO2)). 224–231 serves as a coordination point for ATP; sequence AQTGSGKT. The involved in stimulation of ATPase activity by DNA and RNA, nucleic acid binding and unwinding stretch occupies residues 250–259; sequence ALRAMKENGR. The DEAD box signature appears at 347–350; it reads DEAD. A Helicase C-terminal domain is found at 414 to 575; it reads NITQKVVWVE…EVPSWLENMA (162 aa). A Phosphoserine modification is found at serine 456. The interaction with NXF1 stretch occupies residues 536-661; that stretch reads GNLGLATSFF…YNSQGVDWWG (126 aa). Arginine 592 bears the Omega-N-methylarginine mark. Serine 594, serine 605, and serine 612 each carry phosphoserine. Residues 601 to 633 form a disordered region; it reads DYRQSSGASSSSFSSSRASSSRSGGGGHGGSRG. The segment covering 604-622 has biased composition (low complexity); the sequence is QSSGASSSSFSSSRASSSR. Residues arginine 617 and arginine 632 each carry the omega-N-methylarginine modification. Residues 623 to 633 show a composition bias toward gly residues; that stretch reads SGGGGHGGSRG.

This sequence belongs to the DEAD box helicase family. DDX3/DED1 subfamily. Homodimer; can bind RNA as a monomer and as a dimer/oligomer. Interacts with TDRD3. When phosphorylated, interacts with IRF3; the interaction facilitates the phosphorylation and activation of IRF3 by IKBKE. Directly interacts with XPO1/CRM1. The interaction with XPO1/CMR1 is dependent on the DDX3X nuclear export signal motif and XPO1 interaction with GTPase RAN in its active GTP-bound form. Weakly interacts with TBKBP1/SINTBAD. Directly interacts with TRAF3; this interaction stimulates TRAF3 'Lys-63' ubiquitination. Interacts with CSNK1E in a Wnt-dependent manner; this interaction greatly enhances CSNK1E affinity for ATP, stimulates its kinase activity and promotes CSNK1E-mediated DVL2 phosphorylation. In the presence of RNA, the interaction is decreased. Also interacts with CSNK1D and stimulates its kinase activity. Interacts with TRPV4; this interaction is decreased when the TRPV4 channel is activated, leading to DDX3X relocalization to the nucleus. Interacts with MAP3K14/NIK. Directly interacts with CHUK/IKKA after physiological activation of the TLR7 and TLR8 pathways; this interaction enhances CHUK autophosphorylation. May associate with EIF4F complex, composed of at least EIF4A, EIF4E and EIF4G1/EIF4G3. Directly interacts with EIF4E in an RNA-independent manner; this interaction enhances EIF4E cap-binding ability. Directly interacts with EIF4G1 in an RNA-independent manner. DDX3X competes with EIF4G1 for interaction with EIF4E. Interacts with EIF4A1 and EIF2S1 in an RNA-independent manner. Associates with the eukaryotic translation initiation factor 3 (eIF-3) complex, including with EIF3B and EIF3C subunits. Directly interacts with IKBKE/IKKE; this interaction stimulates IKBKE activating autophosphorylation and is induced upon viral infection. Interacts with TBK1. Interacts with SP1; this interaction potentiates SP1-induced CDKN1A/WAF1/CIP1 transcription. Interacts with GSK3A and GSK3B. Interacts with several death receptors, inclusing FAS, TNFRSF10A and TNFRSF10B. Recruited to TNFRSF10B in the absence of receptor stimulation. When TNFRSF10B is stimulated, further recruited to the receptor and cleaved by caspases. A large proteolytic fragment remains associated with TNFRSF10B. Interacts (via C-terminus) with NXF1/TAP; this interaction may be partly involved in DDX3X nuclear export and in NXF1 localization to stress granules. Identified in an mRNP complex, composed of at least DHX9, DDX3X, ELAVL1, HNRNPU, IGF2BP1/2, ILF3, PABPC1, PCBP2, PTBP2, STAU1, STAU2, SYNCRIP and YBX1. The interaction with IGF2BP1/2 is RNA-dependent. Directly interacts with PABPC1/PABP1 in an RNA-independent manner. This interaction increases in stressed cells and decreases during cell recovery. Interacts (via C-terminus) with MAVS/IPS-1; this interaction potentiates MAVS-mediated IFNB induction. Interacts with ERCC6/CBS. Interacts with DHX33 in an RNA-independent manner. Interacts with DDX5 in the cytoplasm; this interaction may be more efficient when both proteins are unphosphorylated. Interacts with RIGI. Interacts with IFIH1/MDA5. Interacts with NCAPH; this interaction may be important for the NCAPH localization at condensing chromosomes during mitosis. Interacts with NLRP3 (via NACHT domain) under inflammasome-activating conditions. Interacts with CAPRIN1. Interacts with HNF4A and NR0B2/SHP in an RNA-independent manner; this interaction disrupts the interaction between HNF4 and NR0B2 that forms inactive heterodimers and enhances the formation of active HNF4 homodimers. Interacts with CREBBP/CBP. Interacts with EP300/p300. Interacts with gamma-tubulin. Interacts with phosphorylated TP53. Directly interacts with RELA/p65; this interaction may trap RELA in the cytoplasm, impairing nuclear relocalization upon TNF activating signals. Phosphorylated by TBK1; the phosphorylation is required for the synergistic induction of IFNB mediated by TBK1 and DDX3X. Phosphorylated by IKBKE. Also phosphorylated by CSNK1E; this phosphorylation may inhibit RNA-stimulated ATPase activity. Post-translationally, upon stimulation of death receptors, including TNFRSF10B, recruited to receptors and cleaved by caspases. Proteolytic fragments remain associated with the receptors. This cleavage presumably inactivates DDX3X anti-apoptotic function. In terms of processing, ubiquitinated by RNF39 via 'Lys-48'-linked ubiquitination; leading to proteasomal degradation. In terms of tissue distribution, expressed in ovary, including in germinal vesicle immature and metaphase II (MII) stage oocytes (at protein level). In the brain, expressed in the granule cells of the cerebellum and dentate gyrus, the pyramidal cells of the hippocampus, the ependymal cells lining the ventricles, choroid plexi and olfactory bulb. Also accumulates in the thalamic nuclei, the dorsal region of the colliculi and the pontine nucleus.

The protein localises to the cell membrane. Its subcellular location is the nucleus. It localises to the cytoplasm. The protein resides in the stress granule. It is found in the inflammasome. The protein localises to the cell projection. Its subcellular location is the lamellipodium. It carries out the reaction ATP + H2O = ADP + phosphate + H(+). In terms of biological role, multifunctional ATP-dependent RNA helicase. The ATPase activity can be stimulated by various ribo-and deoxynucleic acids indicative for a relaxed substrate specificity. In vitro can unwind partially double-stranded DNA with a preference for 5'-single-stranded DNA overhangs. Binds RNA G-quadruplex (rG4s) structures, including those located in the 5'-UTR of NRAS mRNA. Involved in many cellular processes, which do not necessarily require its ATPase/helicase catalytic activities. Involved in transcription regulation. Positively regulates CDKN1A/WAF1/CIP1 transcription in an SP1-dependent manner, hence inhibits cell growth. This function requires its ATPase, but not helicase activity. CDKN1A up-regulation may be cell-type specific. Binds CDH1/E-cadherin promoter and represses its transcription. Potentiates HNF4A-mediated MTTP transcriptional activation; this function requires ATPase, but not helicase activity. Facilitates HNF4A acetylation, possibly catalyzed by CREBBP/EP300, thereby increasing the DNA-binding affinity of HNF4 to its response element. In addition, disrupts the interaction between HNF4 and SHP that forms inactive heterodimers and enhances the formation of active HNF4 homodimers. By promoting HNF4A-induced MTTP expression, may play a role in lipid homeostasis. May positively regulate TP53 transcription. Associates with mRNPs, predominantly with spliced mRNAs carrying an exon junction complex (EJC). Involved in the regulation of translation initiation. Not involved in the general process of translation, but promotes efficient translation of selected complex mRNAs, containing highly structured 5'-untranslated regions (UTR). This function depends on helicase activity. Might facilitate translation by resolving secondary structures of 5'-UTRs during ribosome scanning. Alternatively, may act prior to 43S ribosomal scanning and promote 43S pre-initiation complex entry to mRNAs exhibiting specific RNA motifs, by performing local remodeling of transcript structures located close to the cap moiety. Independently of its ATPase activity, promotes the assembly of functional 80S ribosomes and disassembles from ribosomes prior to the translation elongation process. Positively regulates the translation of cyclin E1/CCNE1 mRNA and consequently promotes G1/S-phase transition during the cell cycle. May activate TP53 translation. Required for endoplasmic reticulum stress-induced ATF4 mRNA translation. Independently of its ATPase/helicase activity, enhances IRES-mediated translation; this activity requires interaction with EIF4E. Independently of its ATPase/helicase activity, has also been shown specifically repress cap-dependent translation, possibly by acting on translation initiation factor EIF4E. Involved in innate immunity, acting as a viral RNA sensor. Binds viral RNAs and promotes the production of type I interferon (IFN-alpha and IFN-beta). Potentiate MAVS/RIGI-mediated induction of IFNB in early stages of infection. Enhances IFNB1 expression via IRF3/IRF7 pathway and participates in NFKB activation in the presence of MAVS and TBK1. Involved in TBK1 and IKBKE-dependent IRF3 activation leading to IFNB induction, acts as a scaffolding adapter that links IKBKE and IRF3 and coordinates their activation. Involved in the TLR7/TLR8 signaling pathway leading to type I interferon induction, including IFNA4 production. In this context, acts as an upstream regulator of IRF7 activation by MAP3K14/NIK and CHUK/IKKA. Stimulates CHUK autophosphorylation and activation following physiological activation of the TLR7 and TLR8 pathways, leading to MAP3K14/CHUK-mediated activatory phosphorylation of IRF7. Also stimulates MAP3K14/CHUK-dependent NF-kappa-B signaling. Negatively regulates TNF-induced IL6 and IL8 expression, via the NF-kappa-B pathway. May act by interacting with RELA/p65 and trapping it in the cytoplasm. May also bind IFNB promoter; the function is independent of IRF3. Involved in both stress and inflammatory responses. Independently of its ATPase/helicase activity, required for efficient stress granule assembly through its interaction with EIF4E, hence promotes survival in stressed cells. Independently of its helicase activity, regulates NLRP3 inflammasome assembly through interaction with NLRP3 and hence promotes cell death by pyroptosis during inflammation. This function is independent of helicase activity. Therefore DDX3X availability may be used to interpret stress signals and choose between pro-survival stress granules and pyroptotic NLRP3 inflammasomes and serve as a live-or-die checkpoint in stressed cells. In association with GSK3A/B, negatively regulates extrinsic apoptotic signaling pathway via death domain receptors, including TNFRSF10B, slowing down the rate of CASP3 activation following death receptor stimulation. Cleavage by caspases may inactivate DDX3X and relieve the inhibition. Independently of its ATPase/helicase activity, allosteric activator of CSNK1E. Stimulates CSNK1E-mediated phosphorylation of DVL2, thereby involved in the positive regulation of Wnt/beta-catenin signaling pathway. Also activates CSNK1A1 and CSNK1D in vitro, but it is uncertain if these targets are physiologically relevant. ATPase and casein kinase-activating functions are mutually exclusive. May be involved in mitotic chromosome segregation. The protein is ATP-dependent RNA helicase DDX3X (Ddx3x) of Mus musculus (Mouse).